The sequence spans 265 residues: Protein Exd1 homolog (265 aa).

The region spanning 32 to 82 is the 3'-5' exonuclease domain; the sequence is EKQLDRIVLIYQVDTTYHSALKDIKDQKIISLLVEPSFYGRHHPTSILVVA.

This sequence belongs to the EXD1 family. As to quaternary structure, homodimer.

In terms of biological role, RNA-binding protein. Inactive exonuclease. The protein is Protein Exd1 homolog of Drosophila melanogaster (Fruit fly).